The following is a 702-amino-acid chain: MIHTLETTVAGRKMKVDFGKTGMLSNAAIFMSYGDTVVMINANASKEPREGIDFFPLSVEYEERLYSVGKIPGGFIKREGKPSDKSILHARSIDRPLRPLFPKGYRNDVQIVNTVLSVEQDNLPEILAINGSSLALCLSSIPFTTPVAAVSVGLVDGEFIINPTVAQRENTILDLTVCATKERVMMVEAGGQEIDEETMYSAIMFGFEECKNIVAFQEEAVAKFGKTKNEPVLYKADEEVEKEVKSFAFDMIKEAMYIMDKDERNAQLDKVKEKISEEFSEKYEDKVADIAEVIYKTQKEIVRNMLLNEDRRPDGRAFDEVRPISCEVGILPRTHGTGLFTRGLTQVMTVATLGALGDVQILDGIAEEESKRYMHHYNFPSYSVGEVRPLRGPGRREIGHGALAERALEPLIPSESEFPYTIRLVSEVLSSNGSTSQASVCGSTLALLDAGVPIKRPAAGIAMGLITSEDLEKEKVITDIQGIEDFFGDMDFKVAGTEKGITSIQFDTKIKGLSNSCVKDALEGAKKARLHILGKIKECIPEPRKELSKYAPRTEIICIDPEKIRDVIGAGGKVINKIIADTNVKIEIKEDGKIFVTSNNEPEGVKKAISIIEGLTKEVVQGEIYLGKVTKTTNFGAFVEILPGKEGLVHISKLDFARVEKVEDVVSVGDEILVKVTDIDNQGRINLSRKDAIAKKEEEKDK.

Positions 485 and 491 each coordinate Mg(2+). Positions Pro-552–Ile-612 constitute a KH domain. In terms of domain architecture, S1 motif spans Gly-622–Lys-690.

Belongs to the polyribonucleotide nucleotidyltransferase family. Mg(2+) serves as cofactor.

Its subcellular location is the cytoplasm. It catalyses the reaction RNA(n+1) + phosphate = RNA(n) + a ribonucleoside 5'-diphosphate. In terms of biological role, involved in mRNA degradation. Catalyzes the phosphorolysis of single-stranded polyribonucleotides processively in the 3'- to 5'-direction. In Clostridium botulinum (strain Loch Maree / Type A3), this protein is Polyribonucleotide nucleotidyltransferase.